The chain runs to 500 residues: MAFPRFLSLLAVVTLSLFLTTTDASSRSLSTPPKTNVLDVVSSLQQTQTILSLDPTRSSLTTTKPESLSDPVFFNSSSPLSLELHSRDTFVASQHKDYKSLTLSRLERDSSRVAGIVAKIRFAVEGVDRSDLKPVYNEDTRYQTEDLTTPVVSGASQGSGEYFSRIGVGTPAKEMYLVLDTGSDVNWIQCEPCADCYQQSDPVFNPTSSSTYKSLTCSAPQCSLLETSACRSNKCLYQVSYGDGSFTVGELATDTVTFGNSGKINNVALGCGHDNEGLFTGAAGLLGLGGGVLSITNQMKATSFSYCLVDRDSGKSSSLDFNSVQLGGGDATAPLLRNKKIDTFYYVGLSGFSVGGEKVVLPDAIFDVDASGSGGVILDCGTAVTRLQTQAYNSLRDAFLKLTVNLKKGSSSISLFDTCYDFSSLSTVKVPTVAFHFTGGKSLDLPAKNYLIPVDDSGTFCFAFAPTSSSLSIIGNVQQQGTRITYDLSKNVIGLSGNKC.

A signal peptide spans 1-24; that stretch reads MAFPRFLSLLAVVTLSLFLTTTDA. A Peptidase A1 domain is found at 162–496; sequence YFSRIGVGTP…DLSKNVIGLS (335 aa). The active site involves Asp180. 6 disulfides stabilise this stretch: Cys190–Cys193, Cys196–Cys271, Cys217–Cys235, Cys222–Cys230, Cys307–Cys500, and Cys419–Cys461. The active site involves Asp379.

This sequence belongs to the peptidase A1 family. In terms of tissue distribution, expressed in young seedlings, leaves, guard-cells, stems, flowers and siliques, but not in roots or mesophyll cells.

Its subcellular location is the endoplasmic reticulum. Its activity is regulated as follows. Inhibited by pepstatin A. Functionally, aspartic protease involved in drought avoidance through abscisic acid signaling. This is Protein ASPARTIC PROTEASE IN GUARD CELL 1 (ASPG1) from Arabidopsis thaliana (Mouse-ear cress).